Reading from the N-terminus, the 429-residue chain is Enolase (429 aa).

Q167 contacts (2R)-2-phosphoglycerate. Catalysis depends on E209, which acts as the Proton donor. Mg(2+) is bound by residues D246, E289, and D316. K341, R370, S371, and K392 together coordinate (2R)-2-phosphoglycerate. The active-site Proton acceptor is the K341.

The protein belongs to the enolase family. Component of the RNA degradosome, a multiprotein complex involved in RNA processing and mRNA degradation. It depends on Mg(2+) as a cofactor.

It is found in the cytoplasm. The protein resides in the secreted. The protein localises to the cell surface. The catalysed reaction is (2R)-2-phosphoglycerate = phosphoenolpyruvate + H2O. Its pathway is carbohydrate degradation; glycolysis; pyruvate from D-glyceraldehyde 3-phosphate: step 4/5. Catalyzes the reversible conversion of 2-phosphoglycerate (2-PG) into phosphoenolpyruvate (PEP). It is essential for the degradation of carbohydrates via glycolysis. The chain is Enolase from Pseudomonas aeruginosa (strain LESB58).